The sequence spans 635 residues: Threonine--tRNA ligase (635 aa).

Positions Met1–Thr61 constitute a TGS domain. Positions Asp242–Pro533 are catalytic. Positions 333, 384, and 510 each coordinate Zn(2+).

The protein belongs to the class-II aminoacyl-tRNA synthetase family. As to quaternary structure, homodimer. Requires Zn(2+) as cofactor.

The protein resides in the cytoplasm. The enzyme catalyses tRNA(Thr) + L-threonine + ATP = L-threonyl-tRNA(Thr) + AMP + diphosphate + H(+). Catalyzes the attachment of threonine to tRNA(Thr) in a two-step reaction: L-threonine is first activated by ATP to form Thr-AMP and then transferred to the acceptor end of tRNA(Thr). Also edits incorrectly charged L-seryl-tRNA(Thr). The protein is Threonine--tRNA ligase of Paraburkholderia xenovorans (strain LB400).